Consider the following 433-residue polypeptide: 23S rRNA (uracil(1939)-C(5))-methyltransferase RlmD (433 aa).

The region spanning 10–68 (RTTTRQIITVSVNDLDSFGQGVARHNGKTLFIPGLLPQENAEVTVTEDKKQYARAKVVR) is the TRAM domain. Residues Cys-81, Cys-87, Cys-90, and Cys-162 each coordinate [4Fe-4S] cluster. 6 residues coordinate S-adenosyl-L-methionine: Gln-265, Phe-294, Asn-299, Glu-315, Asn-342, and Asp-363. Catalysis depends on Cys-389, which acts as the Nucleophile.

The protein belongs to the class I-like SAM-binding methyltransferase superfamily. RNA M5U methyltransferase family. RlmD subfamily.

The catalysed reaction is uridine(1939) in 23S rRNA + S-adenosyl-L-methionine = 5-methyluridine(1939) in 23S rRNA + S-adenosyl-L-homocysteine + H(+). In terms of biological role, catalyzes the formation of 5-methyl-uridine at position 1939 (m5U1939) in 23S rRNA. This is 23S rRNA (uracil(1939)-C(5))-methyltransferase RlmD from Escherichia coli (strain UTI89 / UPEC).